The sequence spans 421 residues: Imidazolonepropionase (421 aa).

Positions 81 and 83 each coordinate Fe(3+). Zn(2+) contacts are provided by His81 and His83. Residues Arg90, Tyr153, and His186 each contribute to the 4-imidazolone-5-propanoate site. Tyr153 contributes to the N-formimidoyl-L-glutamate binding site. Fe(3+) is bound at residue His251. Position 251 (His251) interacts with Zn(2+). Glu254 serves as a coordination point for 4-imidazolone-5-propanoate. Asp326 provides a ligand contact to Fe(3+). Asp326 is a binding site for Zn(2+). N-formimidoyl-L-glutamate-binding residues include Asn328 and Gly330. 4-imidazolone-5-propanoate is bound at residue Ser331.

This sequence belongs to the metallo-dependent hydrolases superfamily. HutI family. Zn(2+) serves as cofactor. Fe(3+) is required as a cofactor.

The protein resides in the cytoplasm. The catalysed reaction is 4-imidazolone-5-propanoate + H2O = N-formimidoyl-L-glutamate. It participates in amino-acid degradation; L-histidine degradation into L-glutamate; N-formimidoyl-L-glutamate from L-histidine: step 3/3. Its function is as follows. Catalyzes the hydrolytic cleavage of the carbon-nitrogen bond in imidazolone-5-propanoate to yield N-formimidoyl-L-glutamate. It is the third step in the universal histidine degradation pathway. This is Imidazolonepropionase from Streptococcus sanguinis (strain SK36).